Here is a 317-residue protein sequence, read N- to C-terminus: Thiamine thiazole synthase (317 aa).

Substrate is bound by residues cysteine 78, glutamate 99 to alanine 100, glycine 107, and valine 172. Cysteine 206 carries the post-translational modification 2,3-didehydroalanine (Cys). Residues aspartate 208, histidine 223, methionine 275, and arginine 285–glycine 287 each bind substrate.

Belongs to the THI4 family. As to quaternary structure, homooctamer. Fe cation serves as cofactor. In terms of processing, during the catalytic reaction, a sulfide is transferred from Cys-206 to a reaction intermediate, generating a dehydroalanine residue.

It localises to the cytoplasm. It is found in the nucleus. It catalyses the reaction [ADP-thiazole synthase]-L-cysteine + glycine + NAD(+) = [ADP-thiazole synthase]-dehydroalanine + ADP-5-ethyl-4-methylthiazole-2-carboxylate + nicotinamide + 3 H2O + 2 H(+). Functionally, involved in biosynthesis of the thiamine precursor thiazole. Catalyzes the conversion of NAD and glycine to adenosine diphosphate 5-(2-hydroxyethyl)-4-methylthiazole-2-carboxylic acid (ADT), an adenylated thiazole intermediate. The reaction includes an iron-dependent sulfide transfer from a conserved cysteine residue of the protein to a thiazole intermediate. The enzyme can only undergo a single turnover, which suggests it is a suicide enzyme. May have additional roles in adaptation to various stress conditions and in DNA damage tolerance. The polypeptide is Thiamine thiazole synthase (Yarrowia lipolytica (strain CLIB 122 / E 150) (Yeast)).